Consider the following 275-residue polypeptide: Probable CCR4-associated factor 1 homolog 7 (275 aa).

A divalent metal cation-binding residues include Asp-40, Glu-42, Asp-167, and Asp-236.

It belongs to the CAF1 family. In terms of assembly, component of the CCR4-NOT complex, at least composed of CRR4 and CAF1 proteins. The cofactor is a divalent metal cation.

It is found in the nucleus. It localises to the cytoplasm. The catalysed reaction is Exonucleolytic cleavage of poly(A) to 5'-AMP.. Its function is as follows. Ubiquitous transcription factor required for a diverse set of processes. It is a component of the CCR4 complex involved in the control of gene expression. The polypeptide is Probable CCR4-associated factor 1 homolog 7 (CAF1-7) (Arabidopsis thaliana (Mouse-ear cress)).